We begin with the raw amino-acid sequence, 148 residues long: uncharacterized protein (148 aa).

The next 4 membrane-spanning stretches (helical) occupy residues 29-49 (FSLV…AAKE), 61-81 (PIIL…PLVM), 99-119 (FIVF…NGFL), and 121-141 (ILVS…TLCI).

Its subcellular location is the cell membrane. This is an uncharacterized protein from Bacillus subtilis (strain 168).